The primary structure comprises 375 residues: MQKLQISVYIYLFMLIVAGPVDLNENSEQKENVEKEGLCNACLWRENTTSSRLEAIKIQILSKLRLETAPNISKDAIRQLLPKAPPLLELIDQFDVQRDAGSDGSLEDDDYHARTDAVITMPTESDLLTQVEGKPKCCFFQFSSKIQYNKLVKAQLWIYLRPVKTPATVFVQILRLIKPMKDGTRYTGIRSLKLDMNPGTGIWQSIDVKTVLQNWLKQPESNLGIEIKALDENGHDLAVTFPEPGEDGLTPFLEVKVTDTPKRSRRDFGLDCDERSTESRCCRYPLTVDFEAFGWDWIIAPKRYKANYCSGECEFVFLQKYPHTHLVHQANPRGSAGPCCTPTKMSPINMLYFNGEGQIIYGKIPAMVVDRCGCS.

The signal sequence occupies residues 1 to 18 (MQKLQISVYIYLFMLIVA). A propeptide spanning residues 19–266 (GPVDLNENSE…VTDTPKRSRR (248 aa)) is cleaved from the precursor. Residues asparagine 47 and asparagine 71 are each glycosylated (N-linked (GlcNAc...) asparagine). 4 cysteine pairs are disulfide-bonded: cysteine 272-cysteine 282, cysteine 281-cysteine 340, cysteine 309-cysteine 372, and cysteine 313-cysteine 374.

Belongs to the TGF-beta family. In terms of assembly, homodimer; disulfide-linked. Interacts with WFIKKN2, leading to inhibit its activity. Interacts with FSTL3. In terms of processing, synthesized as large precursor molecule that undergoes proteolytic cleavage to generate an N-terminal propeptide and a disulfide linked C-terminal dimer, which is the biologically active molecule. The circulating form consists of a latent complex of the C-terminal dimer and other proteins, including its propeptide, which maintain the C-terminal dimer in a latent, inactive state. Ligand activation requires additional cleavage of the prodomain by a tolloid-like metalloproteinase.

It localises to the secreted. Its function is as follows. Acts specifically as a negative regulator of skeletal muscle growth. In Bubalus bubalis (Domestic water buffalo), this protein is Growth/differentiation factor 8 (MSTN).